The following is a 128-amino-acid chain: Gastrotropin (128 aa).

Ala-2 is modified (N-acetylalanine).

It belongs to the calycin superfamily. Fatty-acid binding protein (FABP) family. In terms of tissue distribution, predominantly expressed in ileum; also expressed in ovary.

It is found in the cytoplasm. It localises to the membrane. Binds to bile acids and is involved in enterohepatic bile acid metabolism. Required for efficient apical to basolateral transport of conjugated bile acids in ileal enterocytes. Stimulates gastric acid and pepsinogen secretion. The chain is Gastrotropin (Fabp6) from Rattus norvegicus (Rat).